Reading from the N-terminus, the 150-residue chain is UPF0756 membrane protein plu2726 (150 aa).

The next 4 helical transmembrane spans lie at 8–28 (LLVLLVLAALGIISHNMTVTL), 51–71 (YGLTIGVLILTVGVMAPIASG), 88–108 (LLAIVIGVLVSWLGSRGVSLM), and 123–143 (VLGVALFKGVPVGPLIAAGIL).

The protein belongs to the UPF0756 family.

It localises to the cell membrane. The polypeptide is UPF0756 membrane protein plu2726 (Photorhabdus laumondii subsp. laumondii (strain DSM 15139 / CIP 105565 / TT01) (Photorhabdus luminescens subsp. laumondii)).